The following is a 471-amino-acid chain: Citrate synthase, mitochondrial (471 aa).

Catalysis depends on residues histidine 309, histidine 355, and aspartate 409.

The protein belongs to the citrate synthase family. As to quaternary structure, homodimer. In terms of tissue distribution, ubiquitous.

Its subcellular location is the mitochondrion matrix. It carries out the reaction oxaloacetate + acetyl-CoA + H2O = citrate + CoA + H(+). It functions in the pathway carbohydrate metabolism; tricarboxylic acid cycle; isocitrate from oxaloacetate: step 1/2. This Solanum tuberosum (Potato) protein is Citrate synthase, mitochondrial.